Reading from the N-terminus, the 1303-residue chain is Ninein-like protein (1303 aa).

2 EF-hand domains span residues 8–43 and 61–77; these read RYVAQLKDEFDSCDTTGTGYLDKEELTALCHKLSLD and RVNFEEFKEGFVAVLSR. The segment at 107–135 is disordered; that stretch reads TKRYGRRSRPDKTDLELTADSDSLPFGTD. 2 EF-hand domains span residues 203-238 and 240-275; these read VTDGQVRAVWEELGVGAAGSLNREELSLVCDHIGLK and LEAEELDALFRKLDKDQDGKVSLIEFQSGLFKPHDH. Ca(2+) contacts are provided by Asp253, Asp255, Asp257, Lys259, and Glu264. Residues 464–590 are a coiled coil; that stretch reads EYESEVLLEQ…CSELELLKSQ (127 aa). A compositionally biased stretch (polar residues) spans 592 to 617; the sequence is SGKRTRLSRSSLPANDWSNRRALTTE. The interval 592 to 634 is disordered; that stretch reads SGKRTRLSRSSLPANDWSNRRALTTESDSDDPEMKKGTSPQVR. 3 coiled-coil regions span residues 660–791, 821–876, and 919–1146; these read ELAM…LEAE, LAVL…LSAR, and SKQL…VQAQ. A disordered region spans residues 1156–1181; it reads EQMGSGTQEHASHLQTQLAEQQRRTQ. Residues 1159 to 1175 are compositionally biased toward polar residues; the sequence is GSGTQEHASHLQTQLAE. Residues 1202 to 1278 adopt a coiled-coil conformation; it reads QEQYEKLMAS…EQRQKSAEKK (77 aa).

It localises to the cytoplasm. The protein resides in the cytoskeleton. The protein localises to the microtubule organizing center. Its subcellular location is the centrosome. Required for the intracellular transport of organelles and vesicles, and is essential for the photoreceptor's outer segments formation, maintenance and function. The sequence is that of Ninein-like protein (Ninl) from Danio rerio (Zebrafish).